A 461-amino-acid polypeptide reads, in one-letter code: Pancreatic triacylglycerol lipase (461 aa).

An N-terminal signal peptide occupies residues 1-12 (WTLSLLLGAVVG). Intrachain disulfides connect Cys16-Cys22 and Cys103-Cys114. The Nucleophile role is filled by Ser165. Catalysis depends on Asp189, which acts as the Charge relay system. Residues Glu200, Arg203, Asp205, and Asp208 each contribute to the Ca(2+) site. Cys250 and Cys274 are joined by a disulfide. His276 acts as the Charge relay system in catalysis. Disulfide bonds link Cys298/Cys309, Cys312/Cys317, and Cys445/Cys461. One can recognise a PLAT domain in the interval 351–461 (WRYRVDVTLS…EDVLLTLTAC (111 aa)).

This sequence belongs to the AB hydrolase superfamily. Lipase family. As to quaternary structure, forms a 1:1 stoichiometric complex with (pro)colipase/CLPS.

The protein resides in the secreted. It catalyses the reaction a triacylglycerol + H2O = a diacylglycerol + a fatty acid + H(+). The enzyme catalyses 1,2,3-tributanoylglycerol + H2O = dibutanoylglycerol + butanoate + H(+). The catalysed reaction is 1,2,3-tri-(9Z-octadecenoyl)-glycerol + H2O = di-(9Z)-octadecenoylglycerol + (9Z)-octadecenoate + H(+). It carries out the reaction all-trans-retinyl hexadecanoate + H2O = all-trans-retinol + hexadecanoate + H(+). It catalyses the reaction 1,2-di-(9Z-octadecenoyl)-glycerol + H2O = (9Z-octadecenoyl)-glycerol + (9Z)-octadecenoate + H(+). Its activity is regulated as follows. Inhibited by bile salts, is reactivated by (pro)colipase/CLPS. Functionally, plays an important role in fat metabolism. It preferentially splits the esters of long-chain fatty acids at positions 1 and 3, producing mainly 2-monoacylglycerol and free fatty acids, and shows considerably higher activity against insoluble emulsified substrates than against soluble ones. The polypeptide is Pancreatic triacylglycerol lipase (PNLIP) (Equus caballus (Horse)).